A 211-amino-acid polypeptide reads, in one-letter code: Large ribosomal subunit protein uL3 (211 aa).

The segment at 122-147 is disordered; sequence AIKRHGQSRGPMAHGSRYHRRPGSMG.

Belongs to the universal ribosomal protein uL3 family. As to quaternary structure, part of the 50S ribosomal subunit. Forms a cluster with proteins L14 and L19.

Its function is as follows. One of the primary rRNA binding proteins, it binds directly near the 3'-end of the 23S rRNA, where it nucleates assembly of the 50S subunit. The protein is Large ribosomal subunit protein uL3 of Geobacillus sp. (strain WCH70).